Here is a 200-residue protein sequence, read N- to C-terminus: Holliday junction branch migration complex subunit RuvA (200 aa).

The domain I stretch occupies residues 1–63 (MIALVQGRVA…EDSLTLFGFA (63 aa)). A domain II region spans residues 64–138 (DADERDVFEL…DRLGPAQGAA (75 aa)). A flexible linker region spans residues 138–142 (APAAP). The tract at residues 143–200 (VAVDDGADVVDALVGLGWPVRQAQDAVRGVLEDADGTAPDAAGLLRAALRSLAGDARG) is domain III.

Belongs to the RuvA family. In terms of assembly, homotetramer. Forms an RuvA(8)-RuvB(12)-Holliday junction (HJ) complex. HJ DNA is sandwiched between 2 RuvA tetramers; dsDNA enters through RuvA and exits via RuvB. An RuvB hexamer assembles on each DNA strand where it exits the tetramer. Each RuvB hexamer is contacted by two RuvA subunits (via domain III) on 2 adjacent RuvB subunits; this complex drives branch migration. In the full resolvosome a probable DNA-RuvA(4)-RuvB(12)-RuvC(2) complex forms which resolves the HJ.

The protein localises to the cytoplasm. In terms of biological role, the RuvA-RuvB-RuvC complex processes Holliday junction (HJ) DNA during genetic recombination and DNA repair, while the RuvA-RuvB complex plays an important role in the rescue of blocked DNA replication forks via replication fork reversal (RFR). RuvA specifically binds to HJ cruciform DNA, conferring on it an open structure. The RuvB hexamer acts as an ATP-dependent pump, pulling dsDNA into and through the RuvAB complex. HJ branch migration allows RuvC to scan DNA until it finds its consensus sequence, where it cleaves and resolves the cruciform DNA. The chain is Holliday junction branch migration complex subunit RuvA from Beutenbergia cavernae (strain ATCC BAA-8 / DSM 12333 / CCUG 43141 / JCM 11478 / NBRC 16432 / NCIMB 13614 / HKI 0122).